The sequence spans 90 residues: Histone H1.M6.2 (90 aa).

The disordered stretch occupies residues 1–90 (MSDAAVPPKK…KAVKKAPKKK (90 aa)). Residues 11 to 90 (ASPKKAAAKK…KAVKKAPKKK (80 aa)) show a composition bias toward basic residues.

Its subcellular location is the nucleus. The protein resides in the chromosome. This chain is Histone H1.M6.2, found in Trypanosoma cruzi.